The following is a 732-amino-acid chain: Cullin-3B (732 aa).

The Cullin neddylation domain occupies 662 to 724 (DRKPQIEAAI…RDFLERDNTD (63 aa)). A Glycyl lysine isopeptide (Lys-Gly) (interchain with G-Cter in NEDD8) cross-link involves residue Lys-676.

The protein belongs to the cullin family. Interacts with BTB/POZ-MATH proteins BPM1 and BPM3. Neddylated. Deneddylated via its interaction with the COP9 signalosome (CSN) complex.

Its pathway is protein modification; protein ubiquitination. In terms of biological role, component of the cullin-RING ubiquitin ligases (CRL), or CUL3-RBX1-BTB protein E3 ligase complexes which mediate the ubiquitination and subsequent proteasomal degradation of target proteins. The functional specificity of the CRL complex depends on the BTB domain-containing protein as the substrate recognition component. Involved in embryo pattern formation and endosperm development. Required for the normal division and organization of the root stem cells and columella root cap cells. Regulates primary root growth by an unknown pathway, but in an ethylene-dependent manner. Functions in distal root patterning, by an ethylene-independent mechanism. Functionally redundant with CUL3A. The polypeptide is Cullin-3B (CUL3B) (Arabidopsis thaliana (Mouse-ear cress)).